The following is a 267-amino-acid chain: Phosphate import ATP-binding protein PstB 2 (267 aa).

The 242-residue stretch at 21–262 folds into the ABC transporter domain; sequence LSTKDLHVYY…AKLQSTSDYV (242 aa). 53-60 lines the ATP pocket; it reads GPSGCGKS.

This sequence belongs to the ABC transporter superfamily. Phosphate importer (TC 3.A.1.7) family. As to quaternary structure, the complex is composed of two ATP-binding proteins (PstB), two transmembrane proteins (PstC and PstA) and a solute-binding protein (PstS).

Its subcellular location is the cell membrane. The enzyme catalyses phosphate(out) + ATP + H2O = ADP + 2 phosphate(in) + H(+). Part of the ABC transporter complex PstSACB involved in phosphate import. Responsible for energy coupling to the transport system. This is Phosphate import ATP-binding protein PstB 2 from Streptococcus mutans serotype c (strain ATCC 700610 / UA159).